The primary structure comprises 431 residues: WD repeat-containing protein 18 (431 aa).

6 WD repeats span residues 36-75 (GGQA…QLQQ), 78-116 (MCPG…LLVI), 119-158 (RHYQ…QADP), 170-211 (QHTL…LLLS), 213-257 (LFDM…SFQP), and 267-306 (GHRN…CLRT).

This sequence belongs to the WD repeat IPI3/WDR18 family. Component of the 5FMC complex, at least composed of PELP1, LAS1L, TEX10, WDR18 and SENP3; the complex interacts with methylated CHTOP and ZNF148. Interacts with NOL9. Component of the PELP1 complex, composed of at least PELP1, TEX10 and WDR18. The complex interacts with pre-60S ribosome particles.

The protein resides in the nucleus. Its subcellular location is the nucleolus. It is found in the nucleoplasm. It localises to the cytoplasm. The protein localises to the dynein axonemal particle. Functions as a component of the Five Friends of Methylated CHTOP (5FMC) complex; the 5FMC complex is recruited to ZNF148 by methylated CHTOP, leading to desumoylation of ZNF148 and subsequent transactivation of ZNF148 target genes. Component of the PELP1 complex involved in the nucleolar steps of 28S rRNA maturation and the subsequent nucleoplasmic transit of the pre-60S ribosomal subunit. May play a role during development. The polypeptide is WD repeat-containing protein 18 (Wdr18) (Mus musculus (Mouse)).